The primary structure comprises 474 residues: Ribosomal RNA small subunit methyltransferase F (474 aa).

S-adenosyl-L-methionine is bound by residues 121-127 (ASAPGSK), glutamate 145, aspartate 172, and aspartate 190. The active-site Nucleophile is the cysteine 243.

It belongs to the class I-like SAM-binding methyltransferase superfamily. RsmB/NOP family.

Its subcellular location is the cytoplasm. It catalyses the reaction cytidine(1407) in 16S rRNA + S-adenosyl-L-methionine = 5-methylcytidine(1407) in 16S rRNA + S-adenosyl-L-homocysteine + H(+). Functionally, specifically methylates the cytosine at position 1407 (m5C1407) of 16S rRNA. The sequence is that of Ribosomal RNA small subunit methyltransferase F from Shewanella piezotolerans (strain WP3 / JCM 13877).